Here is a 333-residue protein sequence, read N- to C-terminus: Putative transporter MamV (333 aa).

A run of 5 helical transmembrane segments spans residues 19 to 39 (AWLDMFTALALAVFKTALGVL), 86 to 106 (FLSANFIGISLMAGAAAMLWY), 111 to 131 (LGSGHVQVPEVWAVFGALISA), 170 to 190 (VLAGIVLSILGWVAADHLAAI), and 191 to 211 (LVSLLVLRIGAVIAWDSIHGL).

This sequence belongs to the cation diffusion facilitator (CDF) transporter (TC 2.A.4) family.

The protein localises to the cell inner membrane. Its function is as follows. Expression of just the minimal mamAB gene cluster (amb0961 to amb0978), including this gene, is sufficient to form a minimal magnetosome chain with small magnetite particles. The protein is Putative transporter MamV of Paramagnetospirillum magneticum (strain ATCC 700264 / AMB-1) (Magnetospirillum magneticum).